Consider the following 165-residue polypeptide: Peptide methionine sulfoxide reductase MsrA (165 aa).

Cysteine 11 is a catalytic residue.

This sequence belongs to the MsrA Met sulfoxide reductase family.

It catalyses the reaction L-methionyl-[protein] + [thioredoxin]-disulfide + H2O = L-methionyl-(S)-S-oxide-[protein] + [thioredoxin]-dithiol. It carries out the reaction [thioredoxin]-disulfide + L-methionine + H2O = L-methionine (S)-S-oxide + [thioredoxin]-dithiol. Its function is as follows. Has an important function as a repair enzyme for proteins that have been inactivated by oxidation. Catalyzes the reversible oxidation-reduction of methionine sulfoxide in proteins to methionine. This is Peptide methionine sulfoxide reductase MsrA from Ureaplasma urealyticum serovar 10 (strain ATCC 33699 / Western).